The following is a 544-amino-acid chain: Chromatin assembly factor 1 subunit A (544 aa).

A compositionally biased stretch (polar residues) spans 1 to 22 (MNSESVDSDVAASTSNKGNELC). Disordered stretches follow at residues 1 to 52 (MNSE…EADE), 67 to 117 (IYNG…REQE), and 138 to 160 (QEQQRRKEERDQKLREKEEAQRL). Residues 23–35 (SSSTDITSLSVSS) show a composition bias toward low complexity. A compositionally biased stretch (polar residues) spans 36-47 (PNESVIHSSHSA). The interaction with DNA and pcn1/PCNA stretch occupies residues 56 to 170 (KLSYEGNRKK…RQEQILNKER (115 aa)). Basic and acidic residues predominate over residues 74–117 (AGKEKKLQKQRAQEERIRQKEAERLKREKERQQREQEKKLREQE). A coiled-coil region spans residues 76 to 176 (KEKKLQKQRA…NKERQQLKLN (101 aa)). The PCNA-interaction protein (PIP box) motif lies at 172 to 179 (QLKLNNFF). The tract at residues 325–396 (SNVLLNPWLE…DKDSVNASNT (72 aa)) is interaction with histones H3/H4. Positions 351–388 (DEEDDGEDLESEDEEVDNSDDIVEDGDNAFVDDEDDDK) are enriched in acidic residues. The tract at residues 351-400 (DEEDDGEDLESEDEEVDNSDDIVEDGDNAFVDDEDDDKDSVNASNTHRSS) is disordered.

This sequence belongs to the RLF2 family. As to quaternary structure, component of chromatin assembly factor 1 (CAF-1), composed of pcf1, pcf2 and pcf3. Interacts (via PIP motif) with pcn1/PCNA; the interaction is direct and occurs during S-phase. Interacts with swi6 at the G1/S-phase transition and early S-phase, but not in the G2 phase. The CAF-1 complex interacts with histone H3/H4 dimers.

It localises to the nucleus. Its function is as follows. Acts as a component of the histone chaperone complex chromatin assembly factor 1 (CAF-1), which assembles histone octamers onto DNA during replication and repair. CAF-1 performs the first step of the nucleosome assembly process, bringing newly synthesized histones H3 and H4 to replicating DNA; histones H2A/H2B can bind to this chromatin precursor subsequent to DNA replication to complete the histone octamer. Plays a role in the maintenance of heterochromatin. The sequence is that of Chromatin assembly factor 1 subunit A from Schizosaccharomyces pombe (strain 972 / ATCC 24843) (Fission yeast).